The chain runs to 351 residues: Dihydroorotate dehydrogenase (quinone) (351 aa).

Residues 61 to 65 (AGLDK) and threonine 85 contribute to the FMN site. Lysine 65 is a substrate binding site. 110 to 114 (NRMGF) is a binding site for substrate. FMN contacts are provided by asparagine 139 and asparagine 172. Asparagine 172 contacts substrate. Serine 175 acts as the Nucleophile in catalysis. Asparagine 177 is a binding site for substrate. Positions 217 and 245 each coordinate FMN. A substrate-binding site is contributed by 246–247 (NT). FMN contacts are provided by residues glycine 268, glycine 297, and 318-319 (YS).

Belongs to the dihydroorotate dehydrogenase family. Type 2 subfamily. Monomer. FMN is required as a cofactor.

It is found in the cell membrane. It catalyses the reaction (S)-dihydroorotate + a quinone = orotate + a quinol. It participates in pyrimidine metabolism; UMP biosynthesis via de novo pathway; orotate from (S)-dihydroorotate (quinone route): step 1/1. Functionally, catalyzes the conversion of dihydroorotate to orotate with quinone as electron acceptor. In Xanthomonas campestris pv. campestris (strain 8004), this protein is Dihydroorotate dehydrogenase (quinone).